The sequence spans 553 residues: uncharacterized protein (553 aa).

This is an uncharacterized protein from Rickettsia prowazekii (strain Madrid E).